The sequence spans 241 residues: Homeobox protein TGIF2LX (241 aa).

Disordered regions lie at residues 1 to 58 (MEAA…GNLP) and 126 to 210 (TGKD…SPEE). Over residues 21–39 (AKTQSPAQDTSIMSRNNAD) the composition is skewed to polar residues. A DNA-binding region (homeobox; TALE-type) is located at residues 48-111 (EHKKKRKGNL…INARRRILPD (64 aa)). Low complexity predominate over residues 195–206 (VSVTSPSSPELV).

Belongs to the TALE/TGIF homeobox family. In terms of tissue distribution, specifically expressed in adult testis.

The protein localises to the nucleus. In terms of biological role, may have a transcription role in testis. This is Homeobox protein TGIF2LX (TGIF2LX) from Homo sapiens (Human).